The sequence spans 361 residues: Phosphoserine aminotransferase (361 aa).

L-glutamate is bound at residue Arg-43. Pyridoxal 5'-phosphate is bound by residues 77-78 (AS), Trp-103, Thr-152, Asp-172, and Gln-195. The residue at position 196 (Lys-196) is an N6-(pyridoxal phosphate)lysine. Residue 237 to 238 (NT) participates in pyridoxal 5'-phosphate binding.

This sequence belongs to the class-V pyridoxal-phosphate-dependent aminotransferase family. SerC subfamily. As to quaternary structure, homodimer. Requires pyridoxal 5'-phosphate as cofactor.

It localises to the cytoplasm. The enzyme catalyses O-phospho-L-serine + 2-oxoglutarate = 3-phosphooxypyruvate + L-glutamate. It catalyses the reaction 4-(phosphooxy)-L-threonine + 2-oxoglutarate = (R)-3-hydroxy-2-oxo-4-phosphooxybutanoate + L-glutamate. It participates in amino-acid biosynthesis; L-serine biosynthesis; L-serine from 3-phospho-D-glycerate: step 2/3. The protein operates within cofactor biosynthesis; pyridoxine 5'-phosphate biosynthesis; pyridoxine 5'-phosphate from D-erythrose 4-phosphate: step 3/5. In terms of biological role, catalyzes the reversible conversion of 3-phosphohydroxypyruvate to phosphoserine and of 3-hydroxy-2-oxo-4-phosphonooxybutanoate to phosphohydroxythreonine. This Desulfosudis oleivorans (strain DSM 6200 / JCM 39069 / Hxd3) (Desulfococcus oleovorans) protein is Phosphoserine aminotransferase.